Consider the following 438-residue polypeptide: Serine--tRNA ligase (438 aa).

243–245 (TAE) contacts L-serine. 274–276 (RSE) lines the ATP pocket. Glutamate 297 is a binding site for L-serine. Position 361-364 (361-364 (EISS)) interacts with ATP. L-serine is bound at residue serine 396.

The protein belongs to the class-II aminoacyl-tRNA synthetase family. Type-1 seryl-tRNA synthetase subfamily. Homodimer. The tRNA molecule binds across the dimer.

It is found in the cytoplasm. The enzyme catalyses tRNA(Ser) + L-serine + ATP = L-seryl-tRNA(Ser) + AMP + diphosphate + H(+). The catalysed reaction is tRNA(Sec) + L-serine + ATP = L-seryl-tRNA(Sec) + AMP + diphosphate + H(+). It participates in aminoacyl-tRNA biosynthesis; selenocysteinyl-tRNA(Sec) biosynthesis; L-seryl-tRNA(Sec) from L-serine and tRNA(Sec): step 1/1. Functionally, catalyzes the attachment of serine to tRNA(Ser). Is also able to aminoacylate tRNA(Sec) with serine, to form the misacylated tRNA L-seryl-tRNA(Sec), which will be further converted into selenocysteinyl-tRNA(Sec). The polypeptide is Serine--tRNA ligase (Ralstonia pickettii (strain 12J)).